Consider the following 477-residue polypeptide: Glycogen synthase (477 aa).

Position 15 (Lys-15) interacts with ADP-alpha-D-glucose.

Belongs to the glycosyltransferase 1 family. Bacterial/plant glycogen synthase subfamily.

The enzyme catalyses [(1-&gt;4)-alpha-D-glucosyl](n) + ADP-alpha-D-glucose = [(1-&gt;4)-alpha-D-glucosyl](n+1) + ADP + H(+). Its pathway is glycan biosynthesis; glycogen biosynthesis. In terms of biological role, synthesizes alpha-1,4-glucan chains using ADP-glucose. The chain is Glycogen synthase from Halorhodospira halophila (strain DSM 244 / SL1) (Ectothiorhodospira halophila (strain DSM 244 / SL1)).